Reading from the N-terminus, the 172-residue chain is Lipoprotein signal peptidase (172 aa).

The next 3 membrane-spanning stretches (helical) occupy residues Leu-10–Val-30, Trp-68–Leu-88, and Ser-98–Met-118. Residues Asp-124 and Asp-142 contribute to the active site. Residues Phe-138–Phe-158 form a helical membrane-spanning segment.

Belongs to the peptidase A8 family.

The protein resides in the cell inner membrane. It carries out the reaction Release of signal peptides from bacterial membrane prolipoproteins. Hydrolyzes -Xaa-Yaa-Zaa-|-(S,diacylglyceryl)Cys-, in which Xaa is hydrophobic (preferably Leu), and Yaa (Ala or Ser) and Zaa (Gly or Ala) have small, neutral side chains.. Its pathway is protein modification; lipoprotein biosynthesis (signal peptide cleavage). Its function is as follows. This protein specifically catalyzes the removal of signal peptides from prolipoproteins. In Xanthomonas euvesicatoria pv. vesicatoria (strain 85-10) (Xanthomonas campestris pv. vesicatoria), this protein is Lipoprotein signal peptidase.